Here is an 84-residue protein sequence, read N- to C-terminus: Small ribosomal subunit protein bS18 (84 aa).

The protein belongs to the bacterial ribosomal protein bS18 family. In terms of assembly, part of the 30S ribosomal subunit. Forms a tight heterodimer with protein bS6.

Binds as a heterodimer with protein bS6 to the central domain of the 16S rRNA, where it helps stabilize the platform of the 30S subunit. This is Small ribosomal subunit protein bS18 from Dictyoglomus turgidum (strain DSM 6724 / Z-1310).